Here is a 344-residue protein sequence, read N- to C-terminus: tRNA N6-adenosine threonylcarbamoyltransferase (344 aa).

Residues histidine 113 and histidine 117 each coordinate Fe cation. Substrate-binding positions include 135-139 (LVSGG), aspartate 169, glycine 182, aspartate 186, and asparagine 278. Aspartate 306 lines the Fe cation pocket.

Belongs to the KAE1 / TsaD family. The cofactor is Fe(2+).

Its subcellular location is the cytoplasm. The enzyme catalyses L-threonylcarbamoyladenylate + adenosine(37) in tRNA = N(6)-L-threonylcarbamoyladenosine(37) in tRNA + AMP + H(+). Functionally, required for the formation of a threonylcarbamoyl group on adenosine at position 37 (t(6)A37) in tRNAs that read codons beginning with adenine. Is involved in the transfer of the threonylcarbamoyl moiety of threonylcarbamoyl-AMP (TC-AMP) to the N6 group of A37, together with TsaE and TsaB. TsaD likely plays a direct catalytic role in this reaction. The polypeptide is tRNA N6-adenosine threonylcarbamoyltransferase (Corynebacterium efficiens (strain DSM 44549 / YS-314 / AJ 12310 / JCM 11189 / NBRC 100395)).